A 474-amino-acid polypeptide reads, in one-letter code: tRNA-2-methylthio-N(6)-dimethylallyladenosine synthase (474 aa).

An MTTase N-terminal domain is found at 3–120 (KKLHIKTWGC…LPEMINHVQE (118 aa)). Positions 12, 49, 83, 157, 161, and 164 each coordinate [4Fe-4S] cluster. Residues 143–375 (RAEGPTAFVS…QQRISQQAME (233 aa)) form the Radical SAM core domain. In terms of domain architecture, TRAM spans 378–441 (RKMVGTVQRV…ASSLRGILLR (64 aa)).

It belongs to the methylthiotransferase family. MiaB subfamily. Monomer. The cofactor is [4Fe-4S] cluster.

The protein resides in the cytoplasm. It carries out the reaction N(6)-dimethylallyladenosine(37) in tRNA + (sulfur carrier)-SH + AH2 + 2 S-adenosyl-L-methionine = 2-methylsulfanyl-N(6)-dimethylallyladenosine(37) in tRNA + (sulfur carrier)-H + 5'-deoxyadenosine + L-methionine + A + S-adenosyl-L-homocysteine + 2 H(+). In terms of biological role, catalyzes the methylthiolation of N6-(dimethylallyl)adenosine (i(6)A), leading to the formation of 2-methylthio-N6-(dimethylallyl)adenosine (ms(2)i(6)A) at position 37 in tRNAs that read codons beginning with uridine. In Yersinia pseudotuberculosis serotype O:3 (strain YPIII), this protein is tRNA-2-methylthio-N(6)-dimethylallyladenosine synthase.